We begin with the raw amino-acid sequence, 451 residues long: Chromosomal replication initiator protein DnaA (451 aa).

The tract at residues 1–72 (MQSIEDIWQE…ANILQEITGR (72 aa)) is domain I, interacts with DnaA modulators. A domain II region spans residues 72–108 (RLFDVRFIDGEQEENFEYTVIKPNPALDEDGIEIGKH). Positions 109–325 (MLNPRYVFDT…GALIRVVAYS (217 aa)) are domain III, AAA+ region. The ATP site is built by Gly-153, Gly-155, Lys-156, and Thr-157. The interval 326–451 (SLVNKDITAG…KNLRKAQNMF (126 aa)) is domain IV, binds dsDNA.

This sequence belongs to the DnaA family. In terms of assembly, oligomerizes as a right-handed, spiral filament on DNA at oriC.

Its subcellular location is the cytoplasm. In terms of biological role, plays an essential role in the initiation and regulation of chromosomal replication. ATP-DnaA binds to the origin of replication (oriC) to initiate formation of the DNA replication initiation complex once per cell cycle. Binds the DnaA box (a 9 base pair repeat at the origin) and separates the double-stranded (ds)DNA. Forms a right-handed helical filament on oriC DNA; dsDNA binds to the exterior of the filament while single-stranded (ss)DNA is stabiized in the filament's interior. The ATP-DnaA-oriC complex binds and stabilizes one strand of the AT-rich DNA unwinding element (DUE), permitting loading of DNA polymerase. After initiation quickly degrades to an ADP-DnaA complex that is not apt for DNA replication. Binds acidic phospholipids. The sequence is that of Chromosomal replication initiator protein DnaA from Listeria monocytogenes serotype 4b (strain F2365).